We begin with the raw amino-acid sequence, 201 residues long: Peptide deformylase 2 (201 aa).

The Fe cation site is built by Cys-121 and His-163. The active site involves Glu-164. His-167 contributes to the Fe cation binding site.

This sequence belongs to the polypeptide deformylase family. Requires Fe(2+) as cofactor.

It catalyses the reaction N-terminal N-formyl-L-methionyl-[peptide] + H2O = N-terminal L-methionyl-[peptide] + formate. Functionally, removes the formyl group from the N-terminal Met of newly synthesized proteins. Requires at least a dipeptide for an efficient rate of reaction. N-terminal L-methionine is a prerequisite for activity but the enzyme has broad specificity at other positions. This is Peptide deformylase 2 from Prochlorococcus marinus (strain MIT 9313).